The following is a 500-amino-acid chain: NAD(P)H-quinone oxidoreductase chain 4, chloroplastic (500 aa).

14 helical membrane-spanning segments follow: residues 4–24, 37–57, 84–104, 111–129, 134–154, 167–187, 208–228, 242–262, 272–292, 305–325, 330–350, 374–396, 411–431, and 462–482; these read FPWLTIIVVLPIFAGSSIFFL, ICICLLELLLTTYTFCYHFQL, GLSIGPILLTGFITTLATLAA, SRLFHFLMLAMYSGQIGSF, LLLFFIMWELELIPVYLLLSM, FILYTAGGSIFLLMGIPGMGL, ALEILFYFGFLIAYAVKSPII, HYSTCMLLAGILLKMGAYGLV, AHSIFSPWLMIVGTIQVIYAA, IAYSSVSHMAFIIIGIGSITD, GAILQIISHGFIGAALFFLAG, IFTMFSSFSMASLALPGMSGFVA, FFMPKILITFVMAIGMILTPI, and LFVSICIFLPVIGIGIYPDFV.

This sequence belongs to the complex I subunit 4 family.

The protein localises to the plastid. It is found in the chloroplast thylakoid membrane. The enzyme catalyses a plastoquinone + NADH + (n+1) H(+)(in) = a plastoquinol + NAD(+) + n H(+)(out). The catalysed reaction is a plastoquinone + NADPH + (n+1) H(+)(in) = a plastoquinol + NADP(+) + n H(+)(out). The polypeptide is NAD(P)H-quinone oxidoreductase chain 4, chloroplastic (Chloranthus spicatus (Chulantree)).